A 609-amino-acid polypeptide reads, in one-letter code: Chloride channel CLIC-like protein 1 (609 aa).

The first 25 residues, 1 to 25 (MKLSSSSSFGLCILVVFFCFVVIES), serve as a signal peptide directing secretion. A run of 3 helical transmembrane segments spans residues 212-235 (VSLIVLIIVAIICTQLWSVVSWFV), 241-260 (FAVSFFISLIWNWFHLYMLA), and 358-380 (VTLQIPVLIIIILAILIFVYGSA). The disordered stretch occupies residues 398–553 (EQPPPAVGQR…PSSIDVKTVG (156 aa)). Composition is skewed to basic and acidic residues over residues 454–474 (ENREEDRSMDIRQEFSTKRTP) and 507–537 (EEVKVEEKEKKESFSVDNKEQKETKSPDRSE). Residues 538–547 (PITSEPPSSI) are compositionally biased toward low complexity.

Belongs to the chloride channel MCLC family. In terms of tissue distribution, expressed in the hindbrain, swim bladder and the eye at 1 day post fertilization (dpf) with increased expression at 3 dpf. At 3 dpf, most prominent expression in the retina, with strong expression in the ganglion cell layer, outer nuclear layer and the retinal pigmented epithelium.

It localises to the endoplasmic reticulum membrane. The protein resides in the golgi apparatus membrane. The protein localises to the nucleus membrane. Functionally, seems to act as a chloride ion channel. Plays a role in retina development. In Danio rerio (Zebrafish), this protein is Chloride channel CLIC-like protein 1.